We begin with the raw amino-acid sequence, 366 residues long: Chorismate synthase (366 aa).

Residues Arg-48 and Arg-54 each coordinate NADP(+). FMN is bound by residues 125-127 (RSS), 238-239 (NA), Gly-278, 293-297 (KPTSS), and Arg-319.

The protein belongs to the chorismate synthase family. As to quaternary structure, homotetramer. The cofactor is FMNH2.

The catalysed reaction is 5-O-(1-carboxyvinyl)-3-phosphoshikimate = chorismate + phosphate. Its pathway is metabolic intermediate biosynthesis; chorismate biosynthesis; chorismate from D-erythrose 4-phosphate and phosphoenolpyruvate: step 7/7. In terms of biological role, catalyzes the anti-1,4-elimination of the C-3 phosphate and the C-6 proR hydrogen from 5-enolpyruvylshikimate-3-phosphate (EPSP) to yield chorismate, which is the branch point compound that serves as the starting substrate for the three terminal pathways of aromatic amino acid biosynthesis. This reaction introduces a second double bond into the aromatic ring system. The sequence is that of Chorismate synthase from Pseudoalteromonas atlantica (strain T6c / ATCC BAA-1087).